The chain runs to 203 residues: Holliday junction branch migration complex subunit RuvA (203 aa).

Residues 1 to 63 form a domain I region; sequence MIGQLSGKVD…EEHIHLYGFL (63 aa). The interval 64–142 is domain II; that stretch reads TLEEKIFFNL…KISSGSAIIK (79 aa). Residues 143 to 149 are flexible linker; it reads ESLNIKN. The tract at residues 150–203 is domain III; it reads ITPVASNEVIKALVNLGFSRFEAQNAVQGIITQNPEISIDELIKTALKNRNSNF.

This sequence belongs to the RuvA family. Homotetramer. Forms an RuvA(8)-RuvB(12)-Holliday junction (HJ) complex. HJ DNA is sandwiched between 2 RuvA tetramers; dsDNA enters through RuvA and exits via RuvB. An RuvB hexamer assembles on each DNA strand where it exits the tetramer. Each RuvB hexamer is contacted by two RuvA subunits (via domain III) on 2 adjacent RuvB subunits; this complex drives branch migration. In the full resolvosome a probable DNA-RuvA(4)-RuvB(12)-RuvC(2) complex forms which resolves the HJ.

It localises to the cytoplasm. In terms of biological role, the RuvA-RuvB-RuvC complex processes Holliday junction (HJ) DNA during genetic recombination and DNA repair, while the RuvA-RuvB complex plays an important role in the rescue of blocked DNA replication forks via replication fork reversal (RFR). RuvA specifically binds to HJ cruciform DNA, conferring on it an open structure. The RuvB hexamer acts as an ATP-dependent pump, pulling dsDNA into and through the RuvAB complex. HJ branch migration allows RuvC to scan DNA until it finds its consensus sequence, where it cleaves and resolves the cruciform DNA. The polypeptide is Holliday junction branch migration complex subunit RuvA (Rickettsia conorii (strain ATCC VR-613 / Malish 7)).